The primary structure comprises 602 residues: T-box transcription factor TBX15 (602 aa).

The interval 46–84 is disordered; that stretch reads ALSPAGPLGDTEDAAAHGLEPHPDSEQSTGSDSEVLTER. Residues 71-84 are compositionally biased toward polar residues; it reads EQSTGSDSEVLTER. Residues 122-304 constitute a DNA-binding region (T-box); it reads LWKRFHDIGT…RNPFAKGFRD (183 aa). Threonine 330 is modified (phosphothreonine). 2 disordered regions span residues 338-369 and 425-447; these read QKQQ…LSPS and QSGT…PSLI. Residues 346-369 show a composition bias toward low complexity; it reads GTSPTTSSTGTPSPSASSHLLSPS. Polar residues predominate over residues 425–446; the sequence is QSGTTSATQPSETFMPQRTPSL.

In terms of assembly, can form a heterodimer with TBX18.

It is found in the nucleus. Functionally, probable transcriptional regulator involved in the development of the skeleton of the limb, vertebral column and head. Acts by controlling the number of mesenchymal precursor cells and chondrocytes. In Homo sapiens (Human), this protein is T-box transcription factor TBX15 (TBX15).